A 276-amino-acid chain; its full sequence is Large ribosomal subunit protein uL2 (276 aa).

Residues 224–276 (VMNPVDHPHGGGEGKAPIGRKSPMTPWGKPTLGYKTRKKKNKSDKFIIRRRKK) form a disordered region. Over residues 258–276 (KTRKKKNKSDKFIIRRRKK) the composition is skewed to basic residues.

Belongs to the universal ribosomal protein uL2 family. In terms of assembly, part of the 50S ribosomal subunit. Forms a bridge to the 30S subunit in the 70S ribosome.

One of the primary rRNA binding proteins. Required for association of the 30S and 50S subunits to form the 70S ribosome, for tRNA binding and peptide bond formation. It has been suggested to have peptidyltransferase activity; this is somewhat controversial. Makes several contacts with the 16S rRNA in the 70S ribosome. The protein is Large ribosomal subunit protein uL2 of Geobacillus kaustophilus (strain HTA426).